Reading from the N-terminus, the 362-residue chain is S-adenosylmethionine:tRNA ribosyltransferase-isomerase (362 aa).

It belongs to the QueA family. In terms of assembly, monomer.

The protein resides in the cytoplasm. The catalysed reaction is 7-aminomethyl-7-carbaguanosine(34) in tRNA + S-adenosyl-L-methionine = epoxyqueuosine(34) in tRNA + adenine + L-methionine + 2 H(+). It functions in the pathway tRNA modification; tRNA-queuosine biosynthesis. In terms of biological role, transfers and isomerizes the ribose moiety from AdoMet to the 7-aminomethyl group of 7-deazaguanine (preQ1-tRNA) to give epoxyqueuosine (oQ-tRNA). The polypeptide is S-adenosylmethionine:tRNA ribosyltransferase-isomerase (Methylobacterium sp. (strain 4-46)).